A 288-amino-acid polypeptide reads, in one-letter code: Leucine-rich repeat-containing protein 72 (288 aa).

LRR repeat units follow at residues 47–68, 69–90, 91–112, and 113–134; these read DVFE…SRFK, KLKY…TRNY, CLAE…HYLP, and SLHI…VKEL. Positions 148–186 constitute an LRRCT domain; the sequence is NPLCQYNLYRLYIIYHLPGVELLDRNQVTEKERRSMITL.

The protein is Leucine-rich repeat-containing protein 72 (LRRC72) of Bos taurus (Bovine).